The chain runs to 331 residues: Isopentenyl-diphosphate delta-isomerase (331 aa).

Substrate is bound at residue 4-5 (RK). FMN-binding positions include 59 to 61 (AMT), serine 89, and asparagine 116. Glutamine 146 lines the substrate pocket. A Mg(2+)-binding site is contributed by glutamate 147. FMN contacts are provided by residues lysine 178, serine 203, threonine 208, 252–254 (GIR), and 273–274 (SR).

It belongs to the IPP isomerase type 2 family. As to quaternary structure, homooctamer. Dimer of tetramers. The cofactor is FMN. It depends on NADPH as a cofactor. Requires Mg(2+) as cofactor.

It localises to the cytoplasm. It catalyses the reaction isopentenyl diphosphate = dimethylallyl diphosphate. Its function is as follows. Involved in the biosynthesis of isoprenoids. Catalyzes the 1,3-allylic rearrangement of the homoallylic substrate isopentenyl (IPP) to its allylic isomer, dimethylallyl diphosphate (DMAPP). The protein is Isopentenyl-diphosphate delta-isomerase of Streptococcus mutans serotype c (strain ATCC 700610 / UA159).